The primary structure comprises 201 residues: MARYTGPVTRKSRRLRVDLVGGDRSFERRPYPPGQAGRARIKESEYLIQLQEKQKARFTYGVMEKQFRRYYAEANAMPGKTGDNLVILLEARLDNVIYRAGLARTRRQARQLVSHGHFTVNGKKINVPSFRVSQYDIIDVRDRSRSMLWFDEAQDNLVDANVPAWLQVVPSTLRILVHQLPERAQIDIPLQEQLIVEYYSK.

The 61-residue stretch at 91-151 (ARLDNVIYRA…DRSRSMLWFD (61 aa)) folds into the S4 RNA-binding domain.

This sequence belongs to the universal ribosomal protein uS4 family. In terms of assembly, part of the 30S ribosomal subunit. Contacts protein S5. The interaction surface between S4 and S5 is involved in control of translational fidelity.

Its function is as follows. One of the primary rRNA binding proteins, it binds directly to 16S rRNA where it nucleates assembly of the body of the 30S subunit. With S5 and S12 plays an important role in translational accuracy. This chain is Small ribosomal subunit protein uS4, found in Corynebacterium urealyticum (strain ATCC 43042 / DSM 7109).